A 316-amino-acid polypeptide reads, in one-letter code: L-lactate dehydrogenase (316 aa).

Residues valine 16, aspartate 37, lysine 42, tyrosine 68, and 82-83 each bind NAD(+); that span reads GA. Glutamine 85 and arginine 91 together coordinate substrate. NAD(+)-binding positions include serine 104, 121–123, and serine 146; that span reads AAN. 123-126 provides a ligand contact to substrate; it reads NPVD. 151 to 154 contributes to the substrate binding site; the sequence is DSAR. Beta-D-fructose 1,6-bisphosphate is bound by residues arginine 156 and histidine 171. The Proton acceptor role is filled by histidine 178. Tyrosine 222 carries the post-translational modification Phosphotyrosine. Threonine 231 lines the substrate pocket.

It belongs to the LDH/MDH superfamily. LDH family. Homotetramer.

The protein localises to the cytoplasm. It catalyses the reaction (S)-lactate + NAD(+) = pyruvate + NADH + H(+). The protein operates within fermentation; pyruvate fermentation to lactate; (S)-lactate from pyruvate: step 1/1. With respect to regulation, allosterically activated by fructose 1,6-bisphosphate (FBP). In terms of biological role, catalyzes the conversion of lactate to pyruvate. In Staphylococcus epidermidis (strain ATCC 12228 / FDA PCI 1200), this protein is L-lactate dehydrogenase.